A 647-amino-acid polypeptide reads, in one-letter code: DNA ligase (647 aa).

NAD(+) contacts are provided by residues 30 to 34 (DEEYD), 79 to 80 (SM), and Glu-106. Lys-108 (N6-AMP-lysine intermediate) is an active-site residue. Residues Arg-129, Glu-163, and Lys-301 each contribute to the NAD(+) site. Zn(2+)-binding residues include Cys-395, Cys-398, Cys-411, and Cys-416. A BRCT domain is found at 569–647 (SISNALSGKT…SEYERLKLEV (79 aa)).

The protein belongs to the NAD-dependent DNA ligase family. LigA subfamily. Requires Mg(2+) as cofactor. Mn(2+) serves as cofactor.

It carries out the reaction NAD(+) + (deoxyribonucleotide)n-3'-hydroxyl + 5'-phospho-(deoxyribonucleotide)m = (deoxyribonucleotide)n+m + AMP + beta-nicotinamide D-nucleotide.. Its function is as follows. DNA ligase that catalyzes the formation of phosphodiester linkages between 5'-phosphoryl and 3'-hydroxyl groups in double-stranded DNA using NAD as a coenzyme and as the energy source for the reaction. It is essential for DNA replication and repair of damaged DNA. This is DNA ligase from Campylobacter concisus (strain 13826).